Consider the following 299-residue polypeptide: Protoheme IX farnesyltransferase 1 (299 aa).

Helical transmembrane passes span V25–V45, W47–V67, L95–F115, L119–L139, I147–G167, P173–I193, A217–I237, L243–Y263, and I279–L299.

Belongs to the UbiA prenyltransferase family. Protoheme IX farnesyltransferase subfamily.

It is found in the cell inner membrane. The catalysed reaction is heme b + (2E,6E)-farnesyl diphosphate + H2O = Fe(II)-heme o + diphosphate. Its pathway is porphyrin-containing compound metabolism; heme O biosynthesis; heme O from protoheme: step 1/1. In terms of biological role, converts heme B (protoheme IX) to heme O by substitution of the vinyl group on carbon 2 of heme B porphyrin ring with a hydroxyethyl farnesyl side group. This is Protoheme IX farnesyltransferase 1 from Pseudomonas entomophila (strain L48).